A 276-amino-acid polypeptide reads, in one-letter code: Beta-lactamase OXA-1 (276 aa).

Residues 1-25 (MKNTIHINFAIFLIIANIIYSSASA) form the signal peptide. Serine 71 acts as the Acyl-ester intermediate in catalysis. 5 residues coordinate a beta-lactam: serine 71, lysine 74, serine 118, threonine 216, and alanine 218. Position 74 is an N6-carboxylysine (lysine 74).

Belongs to the class-D beta-lactamase family. As to quaternary structure, monomer.

Its subcellular location is the periplasm. It catalyses the reaction a beta-lactam + H2O = a substituted beta-amino acid. With respect to regulation, inhibited by penicillin sulfones. Only weakly inhibited by clavulanic acid and sulbactam. Class D beta-lactamase which confers resistance to the beta-lactam antibiotics, including amoxicillin and ticarcillin. Acts via hydrolysis of the beta-lactam ring. Has penicillin- and cephalosporin-hydrolyzing activities. The protein is Beta-lactamase OXA-1 of Escherichia coli.